Reading from the N-terminus, the 190-residue chain is FMN reductase (NADH) RutF (190 aa).

The protein belongs to the non-flavoprotein flavin reductase family. RutF subfamily.

It carries out the reaction FMNH2 + NAD(+) = FMN + NADH + 2 H(+). Its function is as follows. Catalyzes the reduction of FMN to FMNH2 which is used to reduce pyrimidine by RutA via the Rut pathway. The sequence is that of FMN reductase (NADH) RutF from Pantoea ananatis (strain LMG 20103).